The chain runs to 147 residues: Hemoglobin subunit beta (147 aa).

Position 2 is an N-acetylvaline (V2). The Globin domain maps to 3–147; it reads HLTAEEKSAV…VANALAHKYH (145 aa). T13 carries the phosphothreonine modification. S45 carries the phosphoserine modification. The residue at position 60 (K60) is an N6-acetyllysine. Position 64 (H64) interacts with heme b. K83 carries the post-translational modification N6-acetyllysine. Residue H93 participates in heme b binding. C94 is modified (S-nitrosocysteine). K145 bears the N6-acetyllysine mark.

It belongs to the globin family. In terms of assembly, heterotetramer of two alpha chains and two beta chains. In terms of tissue distribution, red blood cells.

In terms of biological role, involved in oxygen transport from the lung to the various peripheral tissues. The protein is Hemoglobin subunit beta (HBB) of Sapajus apella (Brown-capped capuchin).